We begin with the raw amino-acid sequence, 156 residues long: Small ribosomal subunit protein uS7 (156 aa).

The protein belongs to the universal ribosomal protein uS7 family. Part of the 30S ribosomal subunit. Contacts proteins S9 and S11.

One of the primary rRNA binding proteins, it binds directly to 16S rRNA where it nucleates assembly of the head domain of the 30S subunit. Is located at the subunit interface close to the decoding center, probably blocks exit of the E-site tRNA. This Erythrobacter litoralis (strain HTCC2594) protein is Small ribosomal subunit protein uS7.